The following is a 541-amino-acid chain: Putative apolipoprotein N-acyltransferase (541 aa).

A run of 6 helical transmembrane segments spans residues 31–51 (PLPA…AAHA), 65–85 (GWLF…VSMH), 89–109 (GLAA…LALF), 144–164 (AACW…FPWL), 181–201 (LLGV…LAGL), and 215–235 (LAAG…QFSW). Positions 248–511 (VQGNVEQSQK…AGVLPVAVQG (264 aa)) constitute a CN hydrolase domain. E292 serves as the catalytic Proton acceptor. Residue K366 is part of the active site. C416 functions as the Nucleophile in the catalytic mechanism.

The protein belongs to the CN hydrolase family. Apolipoprotein N-acyltransferase subfamily.

The protein resides in the cell inner membrane. It catalyses the reaction N-terminal S-1,2-diacyl-sn-glyceryl-L-cysteinyl-[lipoprotein] + a glycerophospholipid = N-acyl-S-1,2-diacyl-sn-glyceryl-L-cysteinyl-[lipoprotein] + a 2-acyl-sn-glycero-3-phospholipid + H(+). It participates in protein modification; lipoprotein biosynthesis (N-acyl transfer). Functionally, catalyzes the phospholipid dependent N-acylation of the N-terminal cysteine of apolipoprotein, the last step in lipoprotein maturation. This chain is Putative apolipoprotein N-acyltransferase, found in Bordetella parapertussis (strain 12822 / ATCC BAA-587 / NCTC 13253).